Reading from the N-terminus, the 322-residue chain is RNA-binding motif protein, X-linked 2 (322 aa).

K8 is covalently cross-linked (Glycyl lysine isopeptide (Lys-Gly) (interchain with G-Cter in SUMO2)). Positions 36 to 114 (AWIFLGGLPY…RTIRVDHVSN (79 aa)) constitute an RRM domain. The segment at 134–322 (KGCGARTPSP…SSNPSDRWRH (189 aa)) is disordered. T140 carries the post-translational modification Phosphothreonine. The residue at position 149 (S149) is a Phosphoserine. Residues 155–171 (TKKHKKDKKEKKKKKKE) show a composition bias toward basic residues. Phosphoserine occurs at positions 186 and 188. Residues 195–223 (KEKDDTGPKKHSSKNSERAQKSEPREGQK) show a composition bias toward basic and acidic residues. S232 is subject to Phosphoserine. The segment covering 240-274 (RELKKEKPKHEHKSSSRREAREEKTRIRDRGRSSD) has biased composition (basic and acidic residues). A Glycyl lysine isopeptide (Lys-Gly) (interchain with G-Cter in SUMO2) cross-link involves residue K243. Position 272 is a phosphoserine (S272). Over residues 289–308 (YRSRSRSRDKSHRHKRARRS) the composition is skewed to basic residues. S314 is subject to Phosphoserine.

Belongs to the IST3 family. As to quaternary structure, part of the activated spliceosome B/catalytic step 1 spliceosome, one of the forms of the spliceosome which has a well-formed active site but still cannot catalyze the branching reaction and is composed of at least 52 proteins, the U2, U5 and U6 snRNAs and the pre-mRNA. Component of the minor spliceosome, which splices U12-type introns.

Its subcellular location is the nucleus. Its function is as follows. Involved in pre-mRNA splicing as component of the activated spliceosome. As a component of the minor spliceosome, involved in the splicing of U12-type introns in pre-mRNAs. The protein is RNA-binding motif protein, X-linked 2 (RBMX2) of Homo sapiens (Human).